The following is a 525-amino-acid chain: 2,3-bisphosphoglycerate-independent phosphoglycerate mutase (525 aa).

Positions 18 and 68 each coordinate Mn(2+). The Phosphoserine intermediate role is filled by serine 68. Substrate contacts are provided by residues histidine 129, 159 to 160, arginine 194, arginine 200, 269 to 272, and lysine 345; these read RD and RADR. Aspartate 413, histidine 417, aspartate 454, histidine 455, and histidine 473 together coordinate Mn(2+).

This sequence belongs to the BPG-independent phosphoglycerate mutase family. As to quaternary structure, monomer. The cofactor is Mn(2+).

It carries out the reaction (2R)-2-phosphoglycerate = (2R)-3-phosphoglycerate. It participates in carbohydrate degradation; glycolysis; pyruvate from D-glyceraldehyde 3-phosphate: step 3/5. Its function is as follows. Catalyzes the interconversion of 2-phosphoglycerate and 3-phosphoglycerate. The chain is 2,3-bisphosphoglycerate-independent phosphoglycerate mutase from Chromohalobacter salexigens (strain ATCC BAA-138 / DSM 3043 / CIP 106854 / NCIMB 13768 / 1H11).